The sequence spans 241 residues: Aspartate/glutamate leucyltransferase (241 aa).

Belongs to the R-transferase family. Bpt subfamily.

The protein localises to the cytoplasm. It carries out the reaction N-terminal L-glutamyl-[protein] + L-leucyl-tRNA(Leu) = N-terminal L-leucyl-L-glutamyl-[protein] + tRNA(Leu) + H(+). It catalyses the reaction N-terminal L-aspartyl-[protein] + L-leucyl-tRNA(Leu) = N-terminal L-leucyl-L-aspartyl-[protein] + tRNA(Leu) + H(+). Its function is as follows. Functions in the N-end rule pathway of protein degradation where it conjugates Leu from its aminoacyl-tRNA to the N-termini of proteins containing an N-terminal aspartate or glutamate. This chain is Aspartate/glutamate leucyltransferase, found in Helicobacter hepaticus (strain ATCC 51449 / 3B1).